A 145-amino-acid polypeptide reads, in one-letter code: Protein SprT-like (145 aa).

The SprT-like domain maps to 5–140 (DYVREVSLAD…ACGRCHGRLI (136 aa)). His-64 is a binding site for Zn(2+). Glu-65 is an active-site residue. His-68 lines the Zn(2+) pocket.

This sequence belongs to the SprT family. Zn(2+) is required as a cofactor.

The protein localises to the cytoplasm. The sequence is that of Protein SprT-like from Streptococcus equi subsp. equi (strain 4047).